The following is a 407-amino-acid chain: Arrestin homolog (407 aa).

This sequence belongs to the arrestin family.

The polypeptide is Arrestin homolog (Locusta migratoria (Migratory locust)).